Here is a 122-residue protein sequence, read N- to C-terminus: Protein SPIRAL1-like 3 (122 aa).

2 disordered regions span residues Met-1 to Phe-78 and Lys-96 to Lys-122. Over residues Thr-32–Thr-61 the composition is skewed to low complexity. Ser-73 carries the post-translational modification Phosphoserine.

This sequence belongs to the SPIRAL1 family. As to expression, ubiquitous. Preferentially expressed in above-ground organs.

Its function is as follows. Acts redundantly with SPR1 in maintaining the cortical microtubules organization essential for anisotropic cell growth. This chain is Protein SPIRAL1-like 3 (SP1L3), found in Arabidopsis thaliana (Mouse-ear cress).